The chain runs to 299 residues: F-actin-capping protein subunit alpha-3 (299 aa).

Residues serine 2 and serine 290 each carry the phosphoserine modification.

The protein belongs to the F-actin-capping protein alpha subunit family. Component of the F-actin capping complex, composed of a heterodimer of an alpha and a beta subunit. Component of the WASH complex, composed of F-actin-capping protein subunit alpha (CAPZA1, CAPZA2 or CAPZA3), F-actin-capping protein subunit beta (CAPZB), WASHC1, WASHC2, WASHC3, WASHC4 and WASHC5. Exclusively expressed in the testis.

The protein localises to the cytoplasm. It is found in the cytoskeleton. Its function is as follows. F-actin-capping proteins bind in a Ca(2+)-independent manner to the fast growing ends of actin filaments (barbed end) thereby blocking the exchange of subunits at these ends. Unlike other capping proteins (such as gelsolin and severin), these proteins do not sever actin filaments. May play a role in the morphogenesis of spermatid. This is F-actin-capping protein subunit alpha-3 (Capza3) from Rattus norvegicus (Rat).